A 217-amino-acid polypeptide reads, in one-letter code: Ranaspumin (217 aa).

Disulfide bonds link Cys18–Cys67, Cys38–Cys114, Cys125–Cys168, and Cys146–Cys207.

In terms of assembly, monomer. As to expression, exclusively expressed in females in the early oviduct, the glandular part of the oviduct (pars convoluta dilata) and in the cloaca.

Its subcellular location is the secreted. In terms of biological role, acts as a surfactant. Is the major protein constituent (45%) of foam nests. Has no antimicrobial activity, no larvicidal activity, and is not toxic to mice. This is Ranaspumin from Leptodactylus vastus (Northeastern pepper frog).